The sequence spans 553 residues: Arginine--tRNA ligase (553 aa).

A 'HIGH' region motif is present at residues 130–140 (ANPTGDLHIGH).

It belongs to the class-I aminoacyl-tRNA synthetase family. As to quaternary structure, monomer.

Its subcellular location is the cytoplasm. The catalysed reaction is tRNA(Arg) + L-arginine + ATP = L-arginyl-tRNA(Arg) + AMP + diphosphate. This Staphylococcus aureus (strain MRSA252) protein is Arginine--tRNA ligase.